Consider the following 184-residue polypeptide: UPF0398 protein BC_1561 (184 aa).

The protein belongs to the UPF0398 family.

The protein is UPF0398 protein BC_1561 of Bacillus cereus (strain ATCC 14579 / DSM 31 / CCUG 7414 / JCM 2152 / NBRC 15305 / NCIMB 9373 / NCTC 2599 / NRRL B-3711).